The following is a 795-amino-acid chain: uncharacterized protein (795 aa).

A coiled-coil region spans residues 228–280; it reads NIICFKNKCKNNEKEKKEEEEDHDHDHDDKKKEKEDKEKEEEEEEEDSNDDFE. 4 disordered regions span residues 242–278, 326–430, 455–484, and 673–743; these read EKKE…SNDD, TTTT…TPNR, INQQ…KSEP, and NNNN…NENE. The span at 251–264 shows a compositional bias: basic and acidic residues; sequence DHDHDDKKKEKEDK. Acidic residues predominate over residues 265 to 278; that stretch reads EKEEEEEEEDSNDD. The span at 326–345 shows a compositional bias: low complexity; the sequence is TTTTTVNGSKNSSNTTTPIT. Over residues 362-373 the composition is skewed to acidic residues; sequence DDDDDDDLTDED. The span at 377–398 shows a compositional bias: polar residues; sequence HNEIYSTSPKVSHSTFCQSSPT. Low complexity-rich tracts occupy residues 399–414, 455–480, and 673–729; these read LLDL…QQQQ, INQQ…SSNI, and NNNN…NQNE. Residues 732–743 are compositionally biased toward basic and acidic residues; sequence NENKNENENENE.

This is an uncharacterized protein from Dictyostelium discoideum (Social amoeba).